The chain runs to 172 residues: Large ribosomal subunit protein bL9 (172 aa).

It belongs to the bacterial ribosomal protein bL9 family.

In terms of biological role, binds to the 23S rRNA. This Chlamydia caviae (strain ATCC VR-813 / DSM 19441 / 03DC25 / GPIC) (Chlamydophila caviae) protein is Large ribosomal subunit protein bL9.